A 137-amino-acid chain; its full sequence is MTKTELLWPALITALATMLYLVLVINVGRARAKYGVMPPATTGNEDFERVLRVQYNTLEQLAFFLPGLWLFAIYRDPTIAAILGAVWLLGRILYAWGYYQAAEKRMVGFALGSLSSMILVVGALLSILWQLRQLSQF.

The next 3 helical transmembrane spans lie at 5–25 (ELLW…VLVI), 79–99 (IAAI…WGYY), and 109–129 (FALG…SILW).

Belongs to the MAPEG family.

Its subcellular location is the cell membrane. This is an uncharacterized protein from Synechocystis sp. (strain ATCC 27184 / PCC 6803 / Kazusa).